Consider the following 367-residue polypeptide: Ferrochelatase (367 aa).

The Fe cation site is built by His-226 and Glu-307.

Belongs to the ferrochelatase family.

It localises to the cytoplasm. The enzyme catalyses heme b + 2 H(+) = protoporphyrin IX + Fe(2+). It participates in porphyrin-containing compound metabolism; protoheme biosynthesis; protoheme from protoporphyrin-IX: step 1/1. Functionally, catalyzes the ferrous insertion into protoporphyrin IX. This chain is Ferrochelatase, found in Burkholderia pseudomallei (strain 1106a).